We begin with the raw amino-acid sequence, 526 residues long: Ferrochelatase-2, chloroplastic (526 aa).

This sequence belongs to the ferrochelatase family.

The protein resides in the plastid. Its subcellular location is the chloroplast. The enzyme catalyses heme b + 2 H(+) = protoporphyrin IX + Fe(2+). It participates in porphyrin-containing compound metabolism; protoheme biosynthesis; protoheme from protoporphyrin-IX: step 1/1. In terms of biological role, catalyzes the ferrous insertion into protoporphyrin IX. The protein is Ferrochelatase-2, chloroplastic of Oryza sativa subsp. japonica (Rice).